The primary structure comprises 335 residues: Biotin synthase (335 aa).

The 231-residue stretch at 51-281 folds into the Radical SAM core domain; the sequence is YRVQLASLLS…RSRVRLSAGR (231 aa). [4Fe-4S] cluster-binding residues include Cys-66, Cys-70, and Cys-73. Cys-112, Cys-144, Cys-204, and Arg-276 together coordinate [2Fe-2S] cluster.

Belongs to the radical SAM superfamily. Biotin synthase family. Homodimer. [4Fe-4S] cluster is required as a cofactor. The cofactor is [2Fe-2S] cluster.

The catalysed reaction is (4R,5S)-dethiobiotin + (sulfur carrier)-SH + 2 reduced [2Fe-2S]-[ferredoxin] + 2 S-adenosyl-L-methionine = (sulfur carrier)-H + biotin + 2 5'-deoxyadenosine + 2 L-methionine + 2 oxidized [2Fe-2S]-[ferredoxin]. It functions in the pathway cofactor biosynthesis; biotin biosynthesis; biotin from 7,8-diaminononanoate: step 2/2. In terms of biological role, catalyzes the conversion of dethiobiotin (DTB) to biotin by the insertion of a sulfur atom into dethiobiotin via a radical-based mechanism. In Prochlorococcus marinus (strain MIT 9303), this protein is Biotin synthase.